The following is a 535-amino-acid chain: Palmdelphin (535 aa).

Positions 1 to 105 (MEEAELLKER…KEELQVSTKE (105 aa)) form a coiled coil. Residues 423–450 (VVIDDDDDDDDDEEADKKGEENTKESVS) form a disordered region. Acidic residues predominate over residues 424-436 (VIDDDDDDDDDEE). The segment covering 437 to 446 (ADKKGEENTK) has biased composition (basic and acidic residues).

The protein belongs to the paralemmin family.

It localises to the cytoplasm. The protein localises to the cell projection. The protein resides in the dendrite. It is found in the dendritic spine. The protein is Palmdelphin (palmd) of Xenopus laevis (African clawed frog).